A 204-amino-acid chain; its full sequence is Urease accessory protein UreG (204 aa).

10 to 17 (GPVGAGKT) is a binding site for GTP.

It belongs to the SIMIBI class G3E GTPase family. UreG subfamily. Homodimer. UreD, UreF and UreG form a complex that acts as a GTP-hydrolysis-dependent molecular chaperone, activating the urease apoprotein by helping to assemble the nickel containing metallocenter of UreC. The UreE protein probably delivers the nickel.

Its subcellular location is the cytoplasm. Facilitates the functional incorporation of the urease nickel metallocenter. This process requires GTP hydrolysis, probably effectuated by UreG. In Bacillus sp. (strain TB-90), this protein is Urease accessory protein UreG.